A 438-amino-acid chain; its full sequence is MSTKTVPYTAYKVKDIELAEYGRREIELAEAEMPGLMALRKEYGASKPLKGARIAGCLHMTIQTAVLIETLVELGANVTWSSCNIFSTQDHAAAAIAAAGIPVYAWKGLTEEEFNWCIEQTLFFGEDRKPLNMILDDGGDLTNMVLDEYPELAEGIKGLSEETTTGVHRLYERMKKGTLPMPAINVNDSVTKSKFDNKYGCRESAVDAIRRATDVMLAGKRVVVCGYGDVGKGTAQSFKGAGSIVTVTEIDPICALQAAMDGFEVKQLETVLPKADIVITTTGNKDIVRPEHFEAMKDKTIVANIGHFDNEIAVSWLNEKHGDSKVEIKPQVDKYTINGKDIILLAEGRLVNLGCATGHPSFVMSNSFTNQTLAQIELWKNTDEYKNEVYMLPKHLDEKVAKLHLERIGVELTELKQDQAEYIGVTVEGPYKPEYYRY.

The substrate site is built by Thr-61, Asp-137, and Glu-162. Residue 163–165 (TTT) coordinates NAD(+). The substrate site is built by Lys-192 and Asp-196. NAD(+)-binding positions include Asn-197, 226–231 (GYGDVG), Glu-249, Asn-284, 305–307 (IGH), and Asn-352.

The protein belongs to the adenosylhomocysteinase family. The cofactor is NAD(+).

It localises to the cytoplasm. It catalyses the reaction S-adenosyl-L-homocysteine + H2O = L-homocysteine + adenosine. Its pathway is amino-acid biosynthesis; L-homocysteine biosynthesis; L-homocysteine from S-adenosyl-L-homocysteine: step 1/1. Its function is as follows. May play a key role in the regulation of the intracellular concentration of adenosylhomocysteine. This Christiangramia forsetii (strain DSM 17595 / CGMCC 1.15422 / KT0803) (Gramella forsetii) protein is Adenosylhomocysteinase.